The sequence spans 111 residues: MASVLEENGYITESCPRTADSDVESGDTARHKLESLLNRNMRIQMTDGRSLIGCFLCTDRDCNVILGSAQEFLRPSDSFRIREPRVLGLAMVPGHHIVSIQVELETSPQYI.

Residues 28-106 (TARHKLESLL…IVSIQVELET (79 aa)) enclose the Sm domain.

It belongs to the snRNP Sm proteins family. In terms of assembly, component of the N-terminal acetyltransferase C (NatC) complex, which is composed of naa35, naa38 and naa30.

The protein resides in the cytoplasm. Auxillary component of the N-terminal acetyltransferase C (NatC) complex which catalyzes acetylation of N-terminal methionine residues. The sequence is that of N-alpha-acetyltransferase 38-B, NatC auxiliary subunit (naa38-b) from Xenopus laevis (African clawed frog).